Here is a 397-residue protein sequence, read N- to C-terminus: Mediator of RNA polymerase II transcription subunit 3 (397 aa).

M1 carries the N-acetylmethionine modification. Residues A147–H165 are compositionally biased toward low complexity. 3 disordered regions span residues A147–Q227, S288–L327, and F346–N370. 2 stretches are compositionally biased toward polar residues: residues S166 to H178 and S189 to T202. Residues K211–K223 show a composition bias toward basic residues. Positions G290 to F303 are enriched in polar residues. Low complexity predominate over residues G309–P322.

It belongs to the mediator complex subunit 3 family. In terms of assembly, component of the Mediator complex, which is composed of at least 21 subunits that form three structurally distinct submodules. The Mediator head module contains MED6, MED8, MED11, SRB4/MED17, SRB5/MED18, ROX3/MED19, SRB2/MED20 and SRB6/MED22, the middle module contains MED1, MED4, NUT1/MED5, MED7, CSE2/MED9, NUT2/MED10, SRB7/MED21 and SOH1/MED31, and the tail module contains MED2, PGD1/MED3, RGR1/MED14, GAL11/MED15 and SIN4/MED16. The head and the middle modules interact directly with RNA polymerase II, whereas the elongated tail module interacts with gene-specific regulatory proteins. PGD1/MED3 interacts directly with the CYC8-TUP1 corepressor proteins.

The protein resides in the nucleus. Its function is as follows. Component of the Mediator complex, a coactivator involved in the regulated transcription of nearly all RNA polymerase II-dependent genes. Mediator functions as a bridge to convey information from gene-specific regulatory proteins to the basal RNA polymerase II transcription machinery. The Mediator complex, having a compact conformation in its free form, is recruited to promoters by direct interactions with regulatory proteins and serves for the assembly of a functional preinitiation complex with RNA polymerase II and the general transcription factors. The Mediator complex unfolds to an extended conformation and partially surrounds RNA polymerase II, specifically interacting with the unphosphorylated form of the C-terminal domain (CTD) of RNA polymerase II. The Mediator complex dissociates from the RNA polymerase II holoenzyme and stays at the promoter when transcriptional elongation begins. PGD1/MED3 is also involved in direct repeat recombination. This is Mediator of RNA polymerase II transcription subunit 3 (PGD1) from Saccharomyces cerevisiae (strain ATCC 204508 / S288c) (Baker's yeast).